The following is a 121-amino-acid chain: Nitrogenase-stabilizing/protective protein NifW (121 aa).

This sequence belongs to the NifW family. In terms of assembly, homotrimer; associates with NifD.

Its function is as follows. May protect the nitrogenase Fe-Mo protein from oxidative damage. This is Nitrogenase-stabilizing/protective protein NifW from Synechococcus sp. (strain JA-2-3B'a(2-13)) (Cyanobacteria bacterium Yellowstone B-Prime).